A 141-amino-acid polypeptide reads, in one-letter code: ATP synthase epsilon chain 1 (141 aa).

It belongs to the ATPase epsilon chain family. F-type ATPases have 2 components, CF(1) - the catalytic core - and CF(0) - the membrane proton channel. CF(1) has five subunits: alpha(3), beta(3), gamma(1), delta(1), epsilon(1). CF(0) has three main subunits: a, b and c.

It localises to the cell inner membrane. Produces ATP from ADP in the presence of a proton gradient across the membrane. The polypeptide is ATP synthase epsilon chain 1 (Thiobacillus denitrificans (strain ATCC 25259 / T1)).